A 160-amino-acid chain; its full sequence is Transcription antitermination protein NusB (160 aa).

Belongs to the NusB family.

Functionally, involved in transcription antitermination. Required for transcription of ribosomal RNA (rRNA) genes. Binds specifically to the boxA antiterminator sequence of the ribosomal RNA (rrn) operons. This chain is Transcription antitermination protein NusB, found in Sinorhizobium fredii (strain NBRC 101917 / NGR234).